Here is an 844-residue protein sequence, read N- to C-terminus: MMYSCRERRMITVKWSLCLIFCLSNSILVFAKHLCLPDQRDSLWGFKNEFHVPSEKWRNNTDCCSWDGVSCDPKTGNVVGLDLAGSDLNGPLRSNSSLFRLQHLQKLYLGCNTSFGSLSYNDGLKGGELLDSIGNLKYLKVLSLRGCNLFGKIPSSLGNLSYLTHLDLSFNDFTGVIPDSMGNLNYLRVLNLGKCNFYGKVPSSLGNLSYLAQLDLSYNDFTREGPDSMGNLNRLTDMLLKLNSLTDIDLGSNQLKGMLPSNMSSLSKLEYFYIGGNSFSGSIPSSLFMIPSLVELDLQRNHFSALEIGNISSQSKLQVLILGGNNFNPDIVDLSIFSPLLSLGYLDVSGINLKISSTVSLPSPIEYLVLSSCNISEFPKFLRNQTKLYSLDISANQIEGQVPEWLWSLPELQSINISHNSFNGFEGPADVIQGGGELYMLDISSNIFQDPFPLLPVDSMNFLFSSNNRFSGEIPKTICELDNLVMLVLSNNNFSGSIPRCFENLHLYVLHLRNNNLSGIFPEEAISDRLQSLDVGHNLFSGELPKSLINCSALEFLYVEDNRISDTFPSWLELLPNFQILVLRSNEFYGPIFSPGDSLSFPRLRIFDISENRFTGVLPSDYFAPWSAMSSVVDRIIQHFFQGYYHNSVVLTNKGLNMELVGSGFTIYKTIDVSGNRLEGDIPESISLLKELIVLNMSNNAFTGHIPPSLSNLSNLQSLDLSQNRLSGSIPGELGELTFLARMNFSYNRLEGPIPQTTQIQTQDSSSFTENPGLCGLPLKKNCGGKEEATKQEQDEEKEEEEQVFSWIAAAIGYVPGVVCGLTIGHILVSHKRDWFMRIVSLFT.

The signal sequence occupies residues 1 to 31 (MMYSCRERRMITVKWSLCLIFCLSNSILVFA). The Extracellular portion of the chain corresponds to 32 to 803 (KHLCLPDQRD…QDEEKEEEEQ (772 aa)). N-linked (GlcNAc...) asparagine glycans are attached at residues Asn-59, Asn-95, Asn-112, and Asn-159. LRR repeat units follow at residues 102–126 (QHLQ…GLKG), 136–160 (LKYL…LGNL), 161–183 (SYLT…SMGN), 185–208 (NYLR…LGNL), 209–231 (SYLA…SMGN), 242–265 (LNSL…NMSS), 266–290 (LSKL…LFMI), 292–313 (SLVE…NISS), 315–339 (SKLQ…IFSP), 345–362 (YLDV…VSLP), 363–385 (SPIE…LRNQ), 386–409 (TKLY…LWSL), 410–434 (PELQ…VIQG), 436–457 (GELY…LLPV), 458–481 (DSMN…ICEL), 482–504 (DNLV…CFEN), 506–527 (HLYV…EAIS), 528–551 (DRLQ…LINC), 553–574 (ALEF…WLEL), 575–601 (LPNF…SLSF), 602–625 (PRLR…YFAP), 665–689 (FTIY…ISLL), 690–713 (KELI…LSNL), 714–737 (SNLQ…LGEL), and 739–762 (FLAR…QIQT). Asn-207 carries N-linked (GlcNAc...) asparagine glycosylation. An N-linked (GlcNAc...) asparagine glycan is attached at Asn-262. Asn-310 carries N-linked (GlcNAc...) asparagine glycosylation. 2 N-linked (GlcNAc...) asparagine glycosylation sites follow: Asn-374 and Asn-384. An N-linked (GlcNAc...) asparagine glycan is attached at Asn-416. Asn-493, Asn-516, and Asn-550 each carry an N-linked (GlcNAc...) asparagine glycan. N-linked (GlcNAc...) asparagine glycosylation is found at Asn-696 and Asn-712. The N-linked (GlcNAc...) asparagine glycan is linked to Asn-744. The helical transmembrane segment at 804 to 824 (VFSWIAAAIGYVPGVVCGLTI) threads the bilayer. Residues 825-844 (GHILVSHKRDWFMRIVSLFT) lie on the Cytoplasmic side of the membrane.

The protein belongs to the RLP family.

It localises to the cell membrane. The protein is Receptor-like protein 49 of Arabidopsis thaliana (Mouse-ear cress).